A 454-amino-acid chain; its full sequence is Bifunctional protein GlmU (454 aa).

The pyrophosphorylase stretch occupies residues Met1–Arg226. UDP-N-acetyl-alpha-D-glucosamine contacts are provided by residues Leu7–Gly10, Lys21, Gln73, and Gly78–Thr79. Asp103 is a binding site for Mg(2+). 4 residues coordinate UDP-N-acetyl-alpha-D-glucosamine: Gly140, Glu155, Asn170, and Asn224. Asn224 is a binding site for Mg(2+). Residues Arg227–Glu247 form a linker region. Residues Gly248–Ser454 are N-acetyltransferase. UDP-N-acetyl-alpha-D-glucosamine-binding residues include Arg329 and Lys347. The Proton acceptor role is filled by His359. 2 residues coordinate UDP-N-acetyl-alpha-D-glucosamine: Tyr362 and Asn373. Acetyl-CoA-binding residues include Ala376, Ala419, and Arg436.

In the N-terminal section; belongs to the N-acetylglucosamine-1-phosphate uridyltransferase family. It in the C-terminal section; belongs to the transferase hexapeptide repeat family. Homotrimer. Mg(2+) is required as a cofactor.

It is found in the cytoplasm. It catalyses the reaction alpha-D-glucosamine 1-phosphate + acetyl-CoA = N-acetyl-alpha-D-glucosamine 1-phosphate + CoA + H(+). It carries out the reaction N-acetyl-alpha-D-glucosamine 1-phosphate + UTP + H(+) = UDP-N-acetyl-alpha-D-glucosamine + diphosphate. Its pathway is nucleotide-sugar biosynthesis; UDP-N-acetyl-alpha-D-glucosamine biosynthesis; N-acetyl-alpha-D-glucosamine 1-phosphate from alpha-D-glucosamine 6-phosphate (route II): step 2/2. It functions in the pathway nucleotide-sugar biosynthesis; UDP-N-acetyl-alpha-D-glucosamine biosynthesis; UDP-N-acetyl-alpha-D-glucosamine from N-acetyl-alpha-D-glucosamine 1-phosphate: step 1/1. The protein operates within bacterial outer membrane biogenesis; LPS lipid A biosynthesis. Functionally, catalyzes the last two sequential reactions in the de novo biosynthetic pathway for UDP-N-acetylglucosamine (UDP-GlcNAc). The C-terminal domain catalyzes the transfer of acetyl group from acetyl coenzyme A to glucosamine-1-phosphate (GlcN-1-P) to produce N-acetylglucosamine-1-phosphate (GlcNAc-1-P), which is converted into UDP-GlcNAc by the transfer of uridine 5-monophosphate (from uridine 5-triphosphate), a reaction catalyzed by the N-terminal domain. This Synechococcus sp. (strain CC9311) protein is Bifunctional protein GlmU.